Reading from the N-terminus, the 264-residue chain is Thymidylate synthase (264 aa).

Residue arginine 21 participates in dUMP binding. (6R)-5,10-methylene-5,6,7,8-tetrahydrofolate is bound at residue histidine 51. 126–127 (RR) lines the dUMP pocket. The Nucleophile role is filled by cysteine 146. DUMP is bound by residues 166 to 169 (RSCD), asparagine 177, and 207 to 209 (HLY). Aspartate 169 contributes to the (6R)-5,10-methylene-5,6,7,8-tetrahydrofolate binding site. Position 263 (serine 263) interacts with (6R)-5,10-methylene-5,6,7,8-tetrahydrofolate.

The protein belongs to the thymidylate synthase family. Bacterial-type ThyA subfamily. In terms of assembly, homodimer.

The protein localises to the cytoplasm. It catalyses the reaction dUMP + (6R)-5,10-methylene-5,6,7,8-tetrahydrofolate = 7,8-dihydrofolate + dTMP. It participates in pyrimidine metabolism; dTTP biosynthesis. Catalyzes the reductive methylation of 2'-deoxyuridine-5'-monophosphate (dUMP) to 2'-deoxythymidine-5'-monophosphate (dTMP) while utilizing 5,10-methylenetetrahydrofolate (mTHF) as the methyl donor and reductant in the reaction, yielding dihydrofolate (DHF) as a by-product. This enzymatic reaction provides an intracellular de novo source of dTMP, an essential precursor for DNA biosynthesis. The polypeptide is Thymidylate synthase (Buchnera aphidicola subsp. Acyrthosiphon pisum (strain APS) (Acyrthosiphon pisum symbiotic bacterium)).